Reading from the N-terminus, the 236-residue chain is (5-formylfuran-3-yl)methyl phosphate synthase (236 aa).

The active-site Schiff-base intermediate with substrate is Lys-27. Catalysis depends on Lys-85, which acts as the Proton acceptor.

Belongs to the MfnB family.

It carries out the reaction 2 D-glyceraldehyde 3-phosphate = 4-(hydroxymethyl)-2-furancarboxaldehyde phosphate + phosphate + 2 H2O. The protein operates within cofactor biosynthesis; methanofuran biosynthesis. Its function is as follows. Catalyzes the formation of 4-(hydroxymethyl)-2-furancarboxaldehyde phosphate (4-HFC-P) from two molecules of glyceraldehyde-3-P (GA-3-P). This Methanococcus maripaludis (strain C7 / ATCC BAA-1331) protein is (5-formylfuran-3-yl)methyl phosphate synthase.